The chain runs to 40 residues: Photosystem II reaction center protein J (40 aa).

A helical membrane pass occupies residues 8–28 (IPLWLIGTVTGIIVIGLLGVF).

This sequence belongs to the PsbJ family. PSII is composed of 1 copy each of membrane proteins PsbA, PsbB, PsbC, PsbD, PsbE, PsbF, PsbH, PsbI, PsbJ, PsbK, PsbL, PsbM, PsbT, PsbX, PsbY, PsbZ, Psb30/Ycf12, at least 3 peripheral proteins of the oxygen-evolving complex and a large number of cofactors. It forms dimeric complexes.

It is found in the plastid. Its subcellular location is the chloroplast thylakoid membrane. Its function is as follows. One of the components of the core complex of photosystem II (PSII). PSII is a light-driven water:plastoquinone oxidoreductase that uses light energy to abstract electrons from H(2)O, generating O(2) and a proton gradient subsequently used for ATP formation. It consists of a core antenna complex that captures photons, and an electron transfer chain that converts photonic excitation into a charge separation. This is Photosystem II reaction center protein J from Pinus thunbergii (Japanese black pine).